We begin with the raw amino-acid sequence, 702 residues long: Elongation factor G (702 aa).

Residues 8 to 286 (DKVRNIGIIA…AVVEYLPSPL (279 aa)) form the tr-type G domain. Residues 17–24 (AHIDAGKT), 85–89 (DTPGH), and 139–142 (NKMD) each bind GTP.

This sequence belongs to the TRAFAC class translation factor GTPase superfamily. Classic translation factor GTPase family. EF-G/EF-2 subfamily.

Its subcellular location is the cytoplasm. Its function is as follows. Catalyzes the GTP-dependent ribosomal translocation step during translation elongation. During this step, the ribosome changes from the pre-translocational (PRE) to the post-translocational (POST) state as the newly formed A-site-bound peptidyl-tRNA and P-site-bound deacylated tRNA move to the P and E sites, respectively. Catalyzes the coordinated movement of the two tRNA molecules, the mRNA and conformational changes in the ribosome. The protein is Elongation factor G of Chloroflexus aurantiacus (strain ATCC 29366 / DSM 635 / J-10-fl).